We begin with the raw amino-acid sequence, 167 residues long: Sulfopyruvate decarboxylase subunit alpha (167 aa).

It belongs to the ComD family. Heterododecamer composed of 6 subunits alpha and 6 subunits beta.

It catalyses the reaction 3-sulfopyruvate + H(+) = sulfoacetaldehyde + CO2. The protein operates within cofactor biosynthesis; coenzyme M biosynthesis; sulfoacetaldehyde from phosphoenolpyruvate and sulfite: step 4/4. Its function is as follows. Involved in the biosynthesis of the coenzyme M (2-mercaptoethanesulfonic acid). Catalyzes the decarboxylation of sulfopyruvate to sulfoacetaldehyde. This chain is Sulfopyruvate decarboxylase subunit alpha (comD), found in Methanococcus maripaludis (strain DSM 14266 / JCM 13030 / NBRC 101832 / S2 / LL).